The sequence spans 355 residues: Alanine racemase (355 aa).

The active-site Proton acceptor; specific for D-alanine is the lysine 37. The residue at position 37 (lysine 37) is an N6-(pyridoxal phosphate)lysine. Arginine 129 contributes to the substrate binding site. Tyrosine 251 serves as the catalytic Proton acceptor; specific for L-alanine. Residue methionine 299 coordinates substrate.

This sequence belongs to the alanine racemase family. The cofactor is pyridoxal 5'-phosphate.

The enzyme catalyses L-alanine = D-alanine. It functions in the pathway amino-acid biosynthesis; D-alanine biosynthesis; D-alanine from L-alanine: step 1/1. Functionally, catalyzes the interconversion of L-alanine and D-alanine. May also act on other amino acids. The sequence is that of Alanine racemase (alr) from Deinococcus geothermalis (strain DSM 11300 / CIP 105573 / AG-3a).